Consider the following 329-residue polypeptide: uncharacterized protein (329 aa).

2 coiled-coil regions span residues 57–119 (KKEE…LQEV) and 224–250 (AQRQKQEEVQEVLQEAEKTHQATLGNV).

This is an uncharacterized protein from Macaca fascicularis (Crab-eating macaque).